A 346-amino-acid polypeptide reads, in one-letter code: Probable RNA methyltransferase PA14_40730 (346 aa).

Glu91 acts as the Proton acceptor in catalysis. In terms of domain architecture, Radical SAM core spans 94-320 (LLPRGGLCVS…TKVRNSAGQD (227 aa)). Cys101 and Cys325 are disulfide-bonded. The [4Fe-4S] cluster site is built by Cys108, Cys112, and Cys115. S-adenosyl-L-methionine-binding positions include 153 to 154 (GE), Ser183, 206 to 208 (SLH), and Asn282. Cys325 serves as the catalytic S-methylcysteine intermediate.

Belongs to the radical SAM superfamily. RlmN family. Requires [4Fe-4S] cluster as cofactor.

The protein resides in the cytoplasm. This chain is Probable RNA methyltransferase PA14_40730, found in Pseudomonas aeruginosa (strain UCBPP-PA14).